We begin with the raw amino-acid sequence, 953 residues long: Catenin alpha-2 (953 aa).

At T632 the chain carries Phosphothreonine. Phosphoserine occurs at positions 640, 651, and 901. Over residues 912-927 (EKKPLVKREKPEEFQT) the composition is skewed to basic and acidic residues. The tract at residues 912–939 (EKKPLVKREKPEEFQTRVRRGSQKKHIS) is disordered. Positions 928-938 (RVRRGSQKKHI) are enriched in basic residues. The residue at position 939 (S939) is a Phosphoserine.

This sequence belongs to the vinculin/alpha-catenin family. As to quaternary structure, interacts with CDH1 and CDH2. Interacts with ZNF639; recruits CTNNA2 to the nucleus. Interacts with F-actin. Expressed almost exclusively in the nervous system.

The protein localises to the cell membrane. The protein resides in the cytoplasm. It localises to the cytoskeleton. It is found in the cell junction. Its subcellular location is the adherens junction. The protein localises to the cell projection. The protein resides in the axon. It localises to the nucleus. Functionally, may function as a linker between cadherin adhesion receptors and the cytoskeleton to regulate cell-cell adhesion and differentiation in the nervous system. Required for proper regulation of cortical neuronal migration and neurite growth. It acts as a negative regulator of Arp2/3 complex activity and Arp2/3-mediated actin polymerization. It thereby suppresses excessive actin branching which would impair neurite growth and stability. Regulates morphological plasticity of synapses and cerebellar and hippocampal lamination during development. Functions in the control of startle modulation. The protein is Catenin alpha-2 (Ctnna2) of Mus musculus (Mouse).